The following is a 491-amino-acid chain: Probable malate:quinone oxidoreductase (491 aa).

This sequence belongs to the MQO family. The cofactor is FAD.

The catalysed reaction is (S)-malate + a quinone = a quinol + oxaloacetate. It functions in the pathway carbohydrate metabolism; tricarboxylic acid cycle; oxaloacetate from (S)-malate (quinone route): step 1/1. The protein is Probable malate:quinone oxidoreductase of Actinobacillus pleuropneumoniae serotype 7 (strain AP76).